The following is a 425-amino-acid chain: Glutamyl-tRNA reductase (425 aa).

Substrate-binding positions include 49–52 (TCNR), serine 107, 112–114 (EPQ), and glutamine 118. The active-site Nucleophile is cysteine 50. 187 to 192 (GAGETI) lines the NADP(+) pocket.

Belongs to the glutamyl-tRNA reductase family. As to quaternary structure, homodimer.

It catalyses the reaction (S)-4-amino-5-oxopentanoate + tRNA(Glu) + NADP(+) = L-glutamyl-tRNA(Glu) + NADPH + H(+). The protein operates within porphyrin-containing compound metabolism; protoporphyrin-IX biosynthesis; 5-aminolevulinate from L-glutamyl-tRNA(Glu): step 1/2. Functionally, catalyzes the NADPH-dependent reduction of glutamyl-tRNA(Glu) to glutamate 1-semialdehyde (GSA). The chain is Glutamyl-tRNA reductase from Pseudomonas putida (strain ATCC 700007 / DSM 6899 / JCM 31910 / BCRC 17059 / LMG 24140 / F1).